A 492-amino-acid polypeptide reads, in one-letter code: N-succinylglutamate 5-semialdehyde dehydrogenase (492 aa).

220 to 225 is an NAD(+) binding site; it reads GSANTG. Active-site residues include glutamate 243 and cysteine 277.

Belongs to the aldehyde dehydrogenase family. AstD subfamily.

The enzyme catalyses N-succinyl-L-glutamate 5-semialdehyde + NAD(+) + H2O = N-succinyl-L-glutamate + NADH + 2 H(+). It functions in the pathway amino-acid degradation; L-arginine degradation via AST pathway; L-glutamate and succinate from L-arginine: step 4/5. Functionally, catalyzes the NAD-dependent reduction of succinylglutamate semialdehyde into succinylglutamate. This Shigella flexneri protein is N-succinylglutamate 5-semialdehyde dehydrogenase.